A 101-amino-acid polypeptide reads, in one-letter code: Trp operon repressor homolog (101 aa).

A DNA-binding region spans residues 59–82 (QREIAQKYGVSIAQITRGSNALKA).

Belongs to the TrpR family. In terms of assembly, homodimer.

Its subcellular location is the cytoplasm. Functionally, this protein is an aporepressor. When complexed with L-tryptophan it binds the operator region of the trp operon and prevents the initiation of transcription. In Chlamydia caviae (strain ATCC VR-813 / DSM 19441 / 03DC25 / GPIC) (Chlamydophila caviae), this protein is Trp operon repressor homolog.